The sequence spans 433 residues: 3-phosphoshikimate 1-carboxyvinyltransferase (433 aa).

Residues lysine 21, serine 22, and arginine 26 each contribute to the 3-phosphoshikimate site. Lysine 21 is a phosphoenolpyruvate binding site. The phosphoenolpyruvate site is built by glycine 96 and arginine 124. The 3-phosphoshikimate site is built by serine 167, serine 168, glutamine 169, serine 195, aspartate 310, and lysine 337. Residue glutamine 169 participates in phosphoenolpyruvate binding. Catalysis depends on aspartate 310, which acts as the Proton acceptor. Arginine 341, arginine 384, and lysine 410 together coordinate phosphoenolpyruvate.

It belongs to the EPSP synthase family. As to quaternary structure, monomer.

The protein localises to the cytoplasm. It carries out the reaction 3-phosphoshikimate + phosphoenolpyruvate = 5-O-(1-carboxyvinyl)-3-phosphoshikimate + phosphate. Its pathway is metabolic intermediate biosynthesis; chorismate biosynthesis; chorismate from D-erythrose 4-phosphate and phosphoenolpyruvate: step 6/7. In terms of biological role, catalyzes the transfer of the enolpyruvyl moiety of phosphoenolpyruvate (PEP) to the 5-hydroxyl of shikimate-3-phosphate (S3P) to produce enolpyruvyl shikimate-3-phosphate and inorganic phosphate. This chain is 3-phosphoshikimate 1-carboxyvinyltransferase, found in Clostridium botulinum (strain Eklund 17B / Type B).